Here is a 352-residue protein sequence, read N- to C-terminus: Probable RNA methyltransferase Mpe_A3613 (352 aa).

Glu-88 (proton acceptor) is an active-site residue. A Radical SAM core domain is found at 91-317; sequence LLPRDGLCVS…TKLRRSAGQD (227 aa). An intrachain disulfide couples Cys-98 to Cys-322. 3 residues coordinate [4Fe-4S] cluster: Cys-105, Cys-109, and Cys-112. S-adenosyl-L-methionine contacts are provided by residues 150–151, Ser-180, 203–205, and Asn-279; these read GE and SLH. Cys-322 serves as the catalytic S-methylcysteine intermediate.

The protein belongs to the radical SAM superfamily. RlmN family. [4Fe-4S] cluster is required as a cofactor.

Its subcellular location is the cytoplasm. In Methylibium petroleiphilum (strain ATCC BAA-1232 / LMG 22953 / PM1), this protein is Probable RNA methyltransferase Mpe_A3613.